The sequence spans 223 residues: Deoxyribose-phosphate aldolase (223 aa).

The active-site Proton donor/acceptor is the D92. K154 serves as the catalytic Schiff-base intermediate with acetaldehyde. The active-site Proton donor/acceptor is K182.

This sequence belongs to the DeoC/FbaB aldolase family. DeoC type 1 subfamily.

It is found in the cytoplasm. The catalysed reaction is 2-deoxy-D-ribose 5-phosphate = D-glyceraldehyde 3-phosphate + acetaldehyde. The protein operates within carbohydrate degradation; 2-deoxy-D-ribose 1-phosphate degradation; D-glyceraldehyde 3-phosphate and acetaldehyde from 2-deoxy-alpha-D-ribose 1-phosphate: step 2/2. Its function is as follows. Catalyzes a reversible aldol reaction between acetaldehyde and D-glyceraldehyde 3-phosphate to generate 2-deoxy-D-ribose 5-phosphate. In Pasteurella multocida (strain Pm70), this protein is Deoxyribose-phosphate aldolase.